Reading from the N-terminus, the 400-residue chain is Nicotinate phosphoribosyltransferase (400 aa).

Phosphohistidine; by autocatalysis is present on H220.

The protein belongs to the NAPRTase family. In terms of processing, transiently phosphorylated on a His residue during the reaction cycle. Phosphorylation strongly increases the affinity for substrates and increases the rate of nicotinate D-ribonucleotide production. Dephosphorylation regenerates the low-affinity form of the enzyme, leading to product release.

The enzyme catalyses nicotinate + 5-phospho-alpha-D-ribose 1-diphosphate + ATP + H2O = nicotinate beta-D-ribonucleotide + ADP + phosphate + diphosphate. The protein operates within cofactor biosynthesis; NAD(+) biosynthesis; nicotinate D-ribonucleotide from nicotinate: step 1/1. Its function is as follows. Catalyzes the synthesis of beta-nicotinate D-ribonucleotide from nicotinate and 5-phospho-D-ribose 1-phosphate at the expense of ATP. In Escherichia coli O45:K1 (strain S88 / ExPEC), this protein is Nicotinate phosphoribosyltransferase.